Reading from the N-terminus, the 402-residue chain is mRNA-capping enzyme subunit alpha (402 aa).

K66 serves as the catalytic N6-GMP-lysine intermediate.

Belongs to the eukaryotic GTase family. As to quaternary structure, heterodimer. The mRNA-capping enzyme is composed of two separate chains alpha and beta, respectively a mRNA guanylyltransferase and an mRNA 5'-triphosphate monophosphatase.

Its subcellular location is the nucleus. The enzyme catalyses a 5'-end diphospho-ribonucleoside in mRNA + GTP + H(+) = a 5'-end (5'-triphosphoguanosine)-ribonucleoside in mRNA + diphosphate. Its function is as follows. Second step of mRNA capping. Transfer of the GMP moiety of GTP to the 5'-end of RNA via an enzyme-GMP covalent reaction intermediate. This is mRNA-capping enzyme subunit alpha (rnp-2) from Neurospora crassa (strain ATCC 24698 / 74-OR23-1A / CBS 708.71 / DSM 1257 / FGSC 987).